The primary structure comprises 640 residues: Threonine--tRNA ligase (640 aa).

Residues 1 to 61 (MPVITLPDGS…SNDATLQIIT (61 aa)) enclose the TGS domain. The catalytic stretch occupies residues 242 to 533 (DHRKIGKQLD…LIEHYAGVFP (292 aa)). Residues Cys333, His384, and His510 each contribute to the Zn(2+) site.

This sequence belongs to the class-II aminoacyl-tRNA synthetase family. In terms of assembly, homodimer. The cofactor is Zn(2+).

The protein resides in the cytoplasm. The enzyme catalyses tRNA(Thr) + L-threonine + ATP = L-threonyl-tRNA(Thr) + AMP + diphosphate + H(+). Functionally, catalyzes the attachment of threonine to tRNA(Thr) in a two-step reaction: L-threonine is first activated by ATP to form Thr-AMP and then transferred to the acceptor end of tRNA(Thr). Also edits incorrectly charged L-seryl-tRNA(Thr). This Pseudomonas putida (strain ATCC 700007 / DSM 6899 / JCM 31910 / BCRC 17059 / LMG 24140 / F1) protein is Threonine--tRNA ligase.